A 201-amino-acid chain; its full sequence is Dephospho-CoA kinase (201 aa).

One can recognise a DPCK domain in the interval 3–201; that stretch reads ILGLTGGIGS…QIDSRVGCKI (199 aa). 11–16 contacts ATP; that stretch reads GSGKSL.

Belongs to the CoaE family.

The protein resides in the cytoplasm. The catalysed reaction is 3'-dephospho-CoA + ATP = ADP + CoA + H(+). Its pathway is cofactor biosynthesis; coenzyme A biosynthesis; CoA from (R)-pantothenate: step 5/5. Its function is as follows. Catalyzes the phosphorylation of the 3'-hydroxyl group of dephosphocoenzyme A to form coenzyme A. The chain is Dephospho-CoA kinase from Ehrlichia ruminantium (strain Welgevonden).